Consider the following 316-residue polypeptide: DNA-directed RNA polymerase III subunit RPC6 (316 aa).

Ala2 carries the post-translational modification N-acetylalanine. Residues Lys5 and Lys7 each participate in a glycyl lysine isopeptide (Lys-Gly) (interchain with G-Cter in SUMO2) cross-link. [4Fe-4S] cluster-binding residues include Cys287, Cys290, Cys296, and Cys307.

The protein belongs to the eukaryotic RPC34/RPC39 RNA polymerase subunit family. Component of the RNA polymerase III complex consisting of 17 subunits: a ten-subunit horseshoe-shaped catalytic core composed of POLR3A/RPC1, POLR3B/RPC2, POLR1C/RPAC1, POLR1D/RPAC2, POLR3K/RPC10, POLR2E/RPABC1, POLR2F/RPABC2, POLR2H/RPABC3, POLR2K/RPABC4 and POLR2L/RPABC5; a mobile stalk composed of two subunits POLR3H/RPC8 and CRCP/RPC9, protruding from the core and functioning primarily in transcription initiation; and additional subunits homologous to general transcription factors of the RNA polymerase II machinery, POLR3C/RPC3-POLR3F/RPC6-POLR3G/RPC7 heterotrimer required for transcription initiation and POLR3D/RPC4-POLR3E/RPC5 heterodimer involved in both transcription initiation and termination. Directly interacts with POLR3C. Interacts with TBP and TFIIIB90 and GTF3C4. Interacts with MAF1. As part of the RNA polymerase III complex, interacts with PKP2.

It localises to the nucleus. Functionally, DNA-dependent RNA polymerase catalyzes the transcription of DNA into RNA using the four ribonucleoside triphosphates as substrates. Specific peripheric component of RNA polymerase III (Pol III) which synthesizes small non-coding RNAs including 5S rRNA, snRNAs, tRNAs and miRNAs from at least 500 distinct genomic loci. Part of POLR3C/RPC3-POLR3F/RPC6-POLR3G/RPC7 heterotrimer that coordinates the dynamics of Pol III stalk and clamp modules during the transition from apo to elongation state. Pol III plays a key role in sensing and limiting infection by intracellular bacteria and DNA viruses, including varicella zoster virus. Acts as a nuclear and cytosolic DNA sensor detecting AT-rich DNA, involved in innate immune response. Can sense non-self dsDNA that serves as template for transcription into dsRNA. The non-self RNA polymerase III transcripts, such as Epstein-Barr virus-encoded RNAs (EBERs) induce type I interferon and NF-kappa-B through the RIG-I pathway. Preferentially binds double-stranded DNA (dsDNA). The chain is DNA-directed RNA polymerase III subunit RPC6 from Mus musculus (Mouse).